The sequence spans 264 residues: Regulatory protein RecX (264 aa).

It belongs to the RecX family.

The protein localises to the cytoplasm. Modulates RecA activity. In Limosilactobacillus reuteri (strain DSM 20016) (Lactobacillus reuteri), this protein is Regulatory protein RecX.